A 77-amino-acid polypeptide reads, in one-letter code: Conotoxin ArMKLT2-022 (77 aa).

A signal peptide spans 1–22 (MKLTCVLIVAVLFLTACQLIAA). Positions 23–46 (DDSRDLKRFSRRKMRDGMLNTKNT) are excised as a propeptide. The residue at position 49 (glutamine 49) is a Pyrrolidone carboxylic acid. 3 disulfides stabilise this stretch: cysteine 50/cysteine 65, cysteine 57/cysteine 68, and cysteine 64/cysteine 73.

This sequence belongs to the conotoxin O1 superfamily. In terms of tissue distribution, expressed by the venom duct.

The protein localises to the secreted. The polypeptide is Conotoxin ArMKLT2-022 (Conus arenatus (Sand-dusted cone)).